Consider the following 891-residue polypeptide: Echinoderm microtubule-associated protein-like elp-1 (891 aa).

A compositionally biased stretch (polar residues) spans 77 to 88 (DQSRSPTCSGYS). The interval 77 to 167 (DQSRSPTCSG…ARGSPMRKWV (91 aa)) is disordered. Positions 104–117 (SPSHAPPRSSHANS) are enriched in low complexity. Over residues 118–131 (KSLYINGMNNNSEE) the composition is skewed to polar residues. WD repeat units lie at residues 330–401 (GHTC…TLMV), 404–447 (GFEK…REGE), 499–537 (DKPKTVLSMCFGENDQVVTGDSNGTISIWDPRTCKTTKQ), 541–579 (VHPGGVYSLTLAKSGKILSGGKDRMVSEWDLQDLVRTRR), 626–664 (GDPGNLTFLLTCSSNQLITSSQCGTLRIWNHIDKKVEFS), 708–747 (EGTAPITAVKFAPSGATFAVATKDPHLTIYRIDASKNLLV), 753–792 (HIPAPIVALDFSSDSQYLRGQSIGAHLLFWTKAGEICDGT), 816–853 (SSNGQVTAVAQCEDISACGMENGTIRIYKNPVTSVTAG), and 859–890 (GHGRIIKSVAFSNKIQLFSCSPTDNSVFEWCL).

The protein belongs to the WD repeat EMAP family.

The protein resides in the cytoplasm. Its subcellular location is the cytoskeleton. May modify the assembly dynamics of microtubules, such that microtubules are slightly longer, but more dynamic. In Caenorhabditis elegans, this protein is Echinoderm microtubule-associated protein-like elp-1 (elp-1).